The chain runs to 61 residues: UPF0434 protein PA14_25520 (61 aa).

This sequence belongs to the UPF0434 family.

This is UPF0434 protein PA14_25520 from Pseudomonas aeruginosa (strain UCBPP-PA14).